Consider the following 1145-residue polypeptide: Cation channel sperm-associated auxiliary subunit gamma 2 (1145 aa).

The signal sequence occupies residues 1 to 38 (MVSRPAMSPVSPVWPRKPNLWAFWVLRLVLLLSLKSWA). At 39-1061 (EDALQHCTWL…IHGLPLSSKR (1023 aa)) the chain is on the extracellular side. 2 disulfides stabilise this stretch: Cys-45–Cys-106 and Cys-160–Cys-166. A glycan (N-linked (GlcNAc...) asparagine) is linked at Asn-103. Asn-178 is a glycosylation site (N-linked (GlcNAc...) asparagine). Cys-289 and Cys-344 form a disulfide bridge. 4 N-linked (GlcNAc...) asparagine glycosylation sites follow: Asn-356, Asn-402, Asn-672, and Asn-743. Intrachain disulfides connect Cys-395-Cys-403, Cys-634-Cys-856, Cys-802-Cys-830, Cys-878-Cys-1042, Cys-905-Cys-914, and Cys-1006-Cys-1012. A glycan (N-linked (GlcNAc...) asparagine) is linked at Asn-1038. Residues 1062 to 1083 (TSFIVMVSTSFFIALVVFYILF) traverse the membrane as a helical segment. The Cytoplasmic segment spans residues 1084 to 1145 (CLVWPHIVKA…KEDNVQAKTA (62 aa)).

It belongs to the CATSPERG family. As to quaternary structure, component of the CatSper complex or CatSpermasome composed of the core pore-forming members CATSPER1, CATSPER2, CATSPER3 and CATSPER4 as well as auxiliary members CATSPERB, CATSPERG2, CATSPERD, CATSPERE, CATSPERZ, C2CD6/CATSPERT, SLCO6C1, TMEM249, TMEM262 and EFCAB9. HSPA1 may be an additional auxiliary complex member. The core complex members CATSPER1, CATSPER2, CATSPER3 and CATSPER4 form a heterotetrameric channel. The auxiliary CATSPERB, CATSPERG2, CATSPERD and CATSPERE subunits form a pavilion-like structure over the pore which stabilizes the complex through interactions with CATSPER4, CATSPER3, CATSPER1 and CATSPER2 respectively. SLCO6C1 interacts with CATSPERE and TMEM262/CATSPERH interacts with CATSPERB, further stabilizing the complex. C2CD6/CATSPERT interacts at least with CATSPERD and is required for targeting the CatSper complex in the flagellar membrane. Testis-specific. Specifically expressed in the principal piece of the sperm tail (at protein level). Expressed in spermatocytes and spermatids within the seminiferous tubule but not in interstitial cells.

It localises to the cell projection. It is found in the cilium. The protein resides in the flagellum membrane. Its function is as follows. Auxiliary component of the CatSper complex, a complex involved in sperm cell hyperactivation. Sperm cell hyperactivation is needed for sperm motility which is essential late in the preparation of sperm for fertilization. This chain is Cation channel sperm-associated auxiliary subunit gamma 2, found in Mus musculus (Mouse).